The primary structure comprises 285 residues: Phosphatidylglycerol--prolipoprotein diacylglyceryl transferase (285 aa).

5 helical membrane-spanning segments follow: residues 17 to 37 (ALGL…GLTL), 43 to 63 (WYAL…LFLL), 78 to 98 (LVFW…VLFY), 113 to 133 (WEGG…IWWV), and 139 to 159 (LSWL…LFLG). Position 160 (Arg-160) interacts with a 1,2-diacyl-sn-glycero-3-phospho-(1'-sn-glycerol). 3 helical membrane passes run 195-215 (LYEA…QFFA), 223-243 (GKLA…VEWF), and 256-276 (GLTM…WLII).

This sequence belongs to the Lgt family.

Its subcellular location is the cell inner membrane. The catalysed reaction is L-cysteinyl-[prolipoprotein] + a 1,2-diacyl-sn-glycero-3-phospho-(1'-sn-glycerol) = an S-1,2-diacyl-sn-glyceryl-L-cysteinyl-[prolipoprotein] + sn-glycerol 1-phosphate + H(+). Its pathway is protein modification; lipoprotein biosynthesis (diacylglyceryl transfer). Functionally, catalyzes the transfer of the diacylglyceryl group from phosphatidylglycerol to the sulfhydryl group of the N-terminal cysteine of a prolipoprotein, the first step in the formation of mature lipoproteins. The polypeptide is Phosphatidylglycerol--prolipoprotein diacylglyceryl transferase (Zymomonas mobilis subsp. mobilis (strain ATCC 31821 / ZM4 / CP4)).